Here is a 222-residue protein sequence, read N- to C-terminus: Nucleoside triphosphate pyrophosphatase (222 aa).

D82 (proton acceptor) is an active-site residue.

It belongs to the Maf family. It depends on a divalent metal cation as a cofactor.

It localises to the cytoplasm. It carries out the reaction a ribonucleoside 5'-triphosphate + H2O = a ribonucleoside 5'-phosphate + diphosphate + H(+). The enzyme catalyses a 2'-deoxyribonucleoside 5'-triphosphate + H2O = a 2'-deoxyribonucleoside 5'-phosphate + diphosphate + H(+). Nucleoside triphosphate pyrophosphatase. May have a dual role in cell division arrest and in preventing the incorporation of modified nucleotides into cellular nucleic acids. This chain is Nucleoside triphosphate pyrophosphatase, found in Mycobacterium bovis (strain ATCC BAA-935 / AF2122/97).